The sequence spans 320 residues: Ferrochelatase (320 aa).

Fe cation contacts are provided by His-194 and Glu-275.

It belongs to the ferrochelatase family. Monomer.

The protein localises to the cytoplasm. It catalyses the reaction heme b + 2 H(+) = protoporphyrin IX + Fe(2+). It functions in the pathway porphyrin-containing compound metabolism; protoheme biosynthesis; protoheme from protoporphyrin-IX: step 1/1. In terms of biological role, catalyzes the ferrous insertion into protoporphyrin IX. The sequence is that of Ferrochelatase from Escherichia coli (strain K12 / MC4100 / BW2952).